Here is a 67-residue protein sequence, read N- to C-terminus: Peptide Hp1239 (67 aa).

The signal sequence occupies residues 1-23; that stretch reads MKTQFTVLLITLVLFQMLSQSEA. At phenylalanine 36 the chain carries Phenylalanine amide. The propeptide occupies 40–67; sequence GLSDLSDLDELFDGEITKADLDLLREIM.

The protein belongs to the non-disulfide-bridged peptide (NDBP) superfamily. Short antimicrobial peptide (group 4) family. As to expression, expressed by the venom gland.

It localises to the secreted. It is found in the target cell membrane. Functionally, amphipathic peptide with antibacterial activities. Shows antiviral activities against the herpes simplex virus type-1. It potently inhibits the initial infection by provoking the rupture of viral envelop and the dissociation of proteins from the virions (EC(50) is 0.41 uM). It also effectively inhibits viral attachment (EC(50) is 5.73 uM), viral entry (EC(50) is 4.32 uM) and viral proliferation after infection (EC(50) is 8.41 uM). Morever, it enters mammalian tested cells (Vero) and reduces the intracellular infectivity. The sequence is that of Peptide Hp1239 from Heterometrus petersii (Asian forest scorpion).